Reading from the N-terminus, the 109-residue chain is Spermidine export protein MdtI (109 aa).

4 helical membrane-spanning segments follow: residues 6–26 (FYHIAFLILAVILEIIANILL), 35–55 (VWLGILSLLSVLGAFSALAQA), 64–84 (AYALWGGFGIAATVAAGWILF), and 88–108 (LNYKGWIGLILLLAGMVMIKL).

Belongs to the drug/metabolite transporter (DMT) superfamily. Small multidrug resistance (SMR) (TC 2.A.7.1) family. MdtI subfamily. In terms of assembly, forms a complex with MdtJ.

It localises to the cell inner membrane. In terms of biological role, catalyzes the excretion of spermidine. In Yersinia enterocolitica serotype O:8 / biotype 1B (strain NCTC 13174 / 8081), this protein is Spermidine export protein MdtI.